A 337-amino-acid polypeptide reads, in one-letter code: Inositol 2-dehydrogenase 1 (337 aa).

The protein belongs to the Gfo/Idh/MocA family. As to quaternary structure, homotetramer.

It catalyses the reaction myo-inositol + NAD(+) = scyllo-inosose + NADH + H(+). In terms of biological role, involved in the oxidation of myo-inositol (MI) to 2-keto-myo-inositol (2KMI or 2-inosose). The chain is Inositol 2-dehydrogenase 1 from Saccharopolyspora erythraea (strain ATCC 11635 / DSM 40517 / JCM 4748 / NBRC 13426 / NCIMB 8594 / NRRL 2338).